The following is a 280-amino-acid chain: Hydrolase MT0498 (280 aa).

The CN hydrolase domain occupies 1 to 251 (MRIALAQIRS…PQLLVADIDV (251 aa)). The active-site Proton acceptor is the E40. K110 (proton donor) is an active-site residue. C146 (nucleophile) is an active-site residue.

The protein belongs to the carbon-nitrogen hydrolase superfamily. NIT1/NIT2 family.

This Mycobacterium tuberculosis (strain CDC 1551 / Oshkosh) protein is Hydrolase MT0498.